Reading from the N-terminus, the 587-residue chain is Pyruvate decarboxylase 3 (587 aa).

D48 and H135 together coordinate substrate. Positions 415-496 are thiamine pyrophosphate binding; it reads DSWFNCQKLR…FLINNGGYTI (82 aa). Mg(2+) contacts are provided by D464, N491, and G493. E497 is a binding site for substrate.

This sequence belongs to the TPP enzyme family. As to quaternary structure, homotetramer. It depends on a metal cation as a cofactor. Requires thiamine diphosphate as cofactor.

The catalysed reaction is a 2-oxocarboxylate + H(+) = an aldehyde + CO2. The chain is Pyruvate decarboxylase 3 (PDC3) from Oryza sativa subsp. indica (Rice).